Consider the following 168-residue polypeptide: Transcription antitermination protein NusB (168 aa).

This sequence belongs to the NusB family.

Involved in transcription antitermination. Required for transcription of ribosomal RNA (rRNA) genes. Binds specifically to the boxA antiterminator sequence of the ribosomal RNA (rrn) operons. The protein is Transcription antitermination protein NusB of Prosthecochloris aestuarii (strain DSM 271 / SK 413).